The sequence spans 419 residues: Gamma-glutamyl phosphate reductase (419 aa).

This sequence belongs to the gamma-glutamyl phosphate reductase family.

The protein localises to the cytoplasm. The enzyme catalyses L-glutamate 5-semialdehyde + phosphate + NADP(+) = L-glutamyl 5-phosphate + NADPH + H(+). Its pathway is amino-acid biosynthesis; L-proline biosynthesis; L-glutamate 5-semialdehyde from L-glutamate: step 2/2. Catalyzes the NADPH-dependent reduction of L-glutamate 5-phosphate into L-glutamate 5-semialdehyde and phosphate. The product spontaneously undergoes cyclization to form 1-pyrroline-5-carboxylate. This is Gamma-glutamyl phosphate reductase from Solidesulfovibrio magneticus (strain ATCC 700980 / DSM 13731 / RS-1) (Desulfovibrio magneticus).